Consider the following 170-residue polypeptide: Adenine phosphoribosyltransferase (170 aa).

Belongs to the purine/pyrimidine phosphoribosyltransferase family. As to quaternary structure, homodimer.

It is found in the cytoplasm. The enzyme catalyses AMP + diphosphate = 5-phospho-alpha-D-ribose 1-diphosphate + adenine. The protein operates within purine metabolism; AMP biosynthesis via salvage pathway; AMP from adenine: step 1/1. Functionally, catalyzes a salvage reaction resulting in the formation of AMP, that is energically less costly than de novo synthesis. The polypeptide is Adenine phosphoribosyltransferase (Fervidobacterium nodosum (strain ATCC 35602 / DSM 5306 / Rt17-B1)).